Here is a 76-residue protein sequence, read N- to C-terminus: ATP synthase subunit c (76 aa).

Transmembrane regions (helical) follow at residues 7-27 (VATALAVGLGAIGPGVGIGII) and 50-70 (FIGIAFTEALAIFGLVIAFLI).

Belongs to the ATPase C chain family. In terms of assembly, F-type ATPases have 2 components, F(1) - the catalytic core - and F(0) - the membrane proton channel. F(1) has five subunits: alpha(3), beta(3), gamma(1), delta(1), epsilon(1). F(0) has four main subunits: a(1), b(1), b'(1) and c(10-14). The alpha and beta chains form an alternating ring which encloses part of the gamma chain. F(1) is attached to F(0) by a central stalk formed by the gamma and epsilon chains, while a peripheral stalk is formed by the delta, b and b' chains.

The protein resides in the cell membrane. F(1)F(0) ATP synthase produces ATP from ADP in the presence of a proton or sodium gradient. F-type ATPases consist of two structural domains, F(1) containing the extramembraneous catalytic core and F(0) containing the membrane proton channel, linked together by a central stalk and a peripheral stalk. During catalysis, ATP synthesis in the catalytic domain of F(1) is coupled via a rotary mechanism of the central stalk subunits to proton translocation. Functionally, key component of the F(0) channel; it plays a direct role in translocation across the membrane. A homomeric c-ring of between 10-14 subunits forms the central stalk rotor element with the F(1) delta and epsilon subunits. The sequence is that of ATP synthase subunit c from Chloroflexus aurantiacus (strain ATCC 29366 / DSM 635 / J-10-fl).